Reading from the N-terminus, the 288-residue chain is Transposase InsF for insertion sequence IS3A (288 aa).

In terms of domain architecture, Integrase catalytic spans Tyr-124–Leu-287.

It belongs to the transposase IS3/IS150/IS904 family.

In terms of biological role, involved in the transposition of the insertion sequence IS3. The sequence is that of Transposase InsF for insertion sequence IS3A (insF1) from Escherichia coli (strain K12).